Reading from the N-terminus, the 545-residue chain is Chaperonin GroEL (545 aa).

ATP-binding positions include 29-32 (TLGP), 86-90 (DGTTT), Gly413, 476-478 (NAA), and Asp492.

This sequence belongs to the chaperonin (HSP60) family. Forms a cylinder of 14 subunits composed of two heptameric rings stacked back-to-back. Interacts with the co-chaperonin GroES.

The protein localises to the cytoplasm. The enzyme catalyses ATP + H2O + a folded polypeptide = ADP + phosphate + an unfolded polypeptide.. In terms of biological role, together with its co-chaperonin GroES, plays an essential role in assisting protein folding. The GroEL-GroES system forms a nano-cage that allows encapsulation of the non-native substrate proteins and provides a physical environment optimized to promote and accelerate protein folding. The protein is Chaperonin GroEL of Shouchella clausii (strain KSM-K16) (Alkalihalobacillus clausii).